The primary structure comprises 436 residues: Xylose isomerase (436 aa).

Active-site residues include His-100 and Asp-103. The Mg(2+) site is built by Glu-231, Glu-267, His-270, Asp-295, Asp-306, Asp-308, and Asp-338.

The protein belongs to the xylose isomerase family. As to quaternary structure, homotetramer. It depends on Mg(2+) as a cofactor.

It localises to the cytoplasm. The enzyme catalyses alpha-D-xylose = alpha-D-xylulofuranose. This Agrobacterium fabrum (strain C58 / ATCC 33970) (Agrobacterium tumefaciens (strain C58)) protein is Xylose isomerase.